Reading from the N-terminus, the 225-residue chain is 7-cyano-7-deazaguanine synthase (225 aa).

10 to 20 (FSGGQDSTTLA) is an ATP binding site. Positions 190, 205, 208, and 211 each coordinate Zn(2+).

The protein belongs to the QueC family. The cofactor is Zn(2+).

It catalyses the reaction 7-carboxy-7-deazaguanine + NH4(+) + ATP = 7-cyano-7-deazaguanine + ADP + phosphate + H2O + H(+). It functions in the pathway purine metabolism; 7-cyano-7-deazaguanine biosynthesis. Functionally, catalyzes the ATP-dependent conversion of 7-carboxy-7-deazaguanine (CDG) to 7-cyano-7-deazaguanine (preQ(0)). This chain is 7-cyano-7-deazaguanine synthase, found in Helicobacter pylori (strain J99 / ATCC 700824) (Campylobacter pylori J99).